Consider the following 240-residue polypeptide: Large ribosomal subunit protein uL2 (240 aa).

The tract at residues 200 to 240 (HPFGGGGRQHPGKPKSISRNAPPGRKVGDIASKRTGRGGNE) is disordered.

Belongs to the universal ribosomal protein uL2 family. As to quaternary structure, part of the 50S ribosomal subunit. Forms a bridge to the 30S subunit in the 70S ribosome. Interacts weakly with protein L37Ae.

Functionally, one of the primary rRNA binding proteins. Required for association of the 30S and 50S subunits to form the 70S ribosome, for tRNA binding and peptide bond formation. It has been suggested to have peptidyltransferase activity; this is somewhat controversial. Makes several contacts with the 16S rRNA in the 70S ribosome. The chain is Large ribosomal subunit protein uL2 (rpl2) from Haloarcula marismortui (strain ATCC 43049 / DSM 3752 / JCM 8966 / VKM B-1809) (Halobacterium marismortui).